The sequence spans 467 residues: tRNA-2-methylthio-N(6)-dimethylallyladenosine synthase (467 aa).

Residues 2–118 enclose the MTTase N-terminal domain; sequence PSVFIKTFGC…VAEIADNLLK (117 aa). The [4Fe-4S] cluster site is built by Cys11, Cys47, Cys81, Cys159, Cys163, and Cys166. Residues 145–379 enclose the Radical SAM core domain; the sequence is TKAQPIAYVS…LEIQNKITME (235 aa). In terms of domain architecture, TRAM spans 382-445; that stretch reads QKWVGQVVEI…GHTFYGTPLI (64 aa).

Belongs to the methylthiotransferase family. MiaB subfamily. Monomer. Requires [4Fe-4S] cluster as cofactor.

The protein resides in the cytoplasm. The enzyme catalyses N(6)-dimethylallyladenosine(37) in tRNA + (sulfur carrier)-SH + AH2 + 2 S-adenosyl-L-methionine = 2-methylsulfanyl-N(6)-dimethylallyladenosine(37) in tRNA + (sulfur carrier)-H + 5'-deoxyadenosine + L-methionine + A + S-adenosyl-L-homocysteine + 2 H(+). Functionally, catalyzes the methylthiolation of N6-(dimethylallyl)adenosine (i(6)A), leading to the formation of 2-methylthio-N6-(dimethylallyl)adenosine (ms(2)i(6)A) at position 37 in tRNAs that read codons beginning with uridine. This chain is tRNA-2-methylthio-N(6)-dimethylallyladenosine synthase, found in Methylacidiphilum infernorum (isolate V4) (Methylokorus infernorum (strain V4)).